The chain runs to 267 residues: Triosephosphate isomerase (267 aa).

12-14 serves as a coordination point for substrate; the sequence is NWK. The active-site Electrophile is the H104. Catalysis depends on E176, which acts as the Proton acceptor. Substrate is bound by residues G182, S222, and 243 to 244; that span reads GG.

Belongs to the triosephosphate isomerase family. In terms of assembly, homodimer.

It localises to the cytoplasm. The enzyme catalyses D-glyceraldehyde 3-phosphate = dihydroxyacetone phosphate. It functions in the pathway carbohydrate biosynthesis; gluconeogenesis. Its pathway is carbohydrate degradation; glycolysis; D-glyceraldehyde 3-phosphate from glycerone phosphate: step 1/1. Involved in the gluconeogenesis. Catalyzes stereospecifically the conversion of dihydroxyacetone phosphate (DHAP) to D-glyceraldehyde-3-phosphate (G3P). The sequence is that of Triosephosphate isomerase from Bifidobacterium longum (strain DJO10A).